The primary structure comprises 116 residues: MSFCSFFGGEVFQNHFEPGVYVCAKCGYELFSSRSKYAHSSPWPAFTETIHADSVAKRPEHNRSEALKVSCGKCGNGLGHEFLNDGPKPGQSRFUIFSSSLKFVPKGKETSASQGH.

In terms of domain architecture, MsrB spans 1–106 (MSFCSFFGGE…FSSSLKFVPK (106 aa)). Residues Cys23, Cys26, Cys71, and Cys74 each coordinate Zn(2+). Catalysis depends on Sec95, which acts as the Nucleophile. Sec95 is a non-standard amino acid (selenocysteine).

The protein belongs to the MsrB Met sulfoxide reductase family. It depends on Zn(2+) as a cofactor. Truncated MSRB1/SEPX1 proteins produced by failed UGA/Sec decoding are ubiquitinated by some Cul2-RING E3 ubiquitin-protein ligase complexes (containing either PRAME, PRAMF6, PRAMF9 or FEM1C as substrate-recognition component).

It localises to the cytoplasm. It is found in the nucleus. The protein localises to the cytoskeleton. The catalysed reaction is L-methionyl-[protein] + [thioredoxin]-disulfide + H2O = L-methionyl-(R)-S-oxide-[protein] + [thioredoxin]-dithiol. The enzyme catalyses [thioredoxin]-disulfide + L-methionine + H2O = L-methionine (R)-S-oxide + [thioredoxin]-dithiol. Its function is as follows. Methionine-sulfoxide reductase that specifically reduces methionine (R)-sulfoxide back to methionine. While in many cases, methionine oxidation is the result of random oxidation following oxidative stress, methionine oxidation is also a post-translational modification that takes place on specific residue. Acts as a regulator of actin assembly by reducing methionine (R)-sulfoxide mediated by MICALs (MICAL1, MICAL2 or MICAL3) on actin, thereby promoting filament repolymerization. Plays a role in innate immunity by reducing oxidized actin, leading to actin repolymerization in macrophages. This is Methionine-R-sulfoxide reductase B1 (MSRB1) from Homo sapiens (Human).